The following is an 875-amino-acid chain: Pyrogallol hydroxytransferase large subunit (875 aa).

The interval 82 to 104 (RKSFDPNGERNPQLRGAGLSKQD) is disordered. Ser-175 contributes to the Mo-bis(molybdopterin guanine dinucleotide) binding site.

It belongs to the prokaryotic molybdopterin-containing oxidoreductase family. As to quaternary structure, heterodimer of a large and a small subunit. Mo-bis(molybdopterin guanine dinucleotide) serves as cofactor.

It catalyses the reaction 1,2,3,5-tetrahydroxybenzene + 1,2,3-trihydroxybenzene = 1,2,3,5-tetrahydroxybenzene + 1,3,5-trihydroxybenzene. Its function is as follows. Isomerization of pyrogallol to phloroglucin. The protein is Pyrogallol hydroxytransferase large subunit (athL) of Pelobacter acidigallici.